Reading from the N-terminus, the 492-residue chain is Glutamyl-tRNA(Gln) amidotransferase subunit A (492 aa).

Residues Lys79 and Ser154 each act as charge relay system in the active site. The Acyl-ester intermediate role is filled by Ser178.

The protein belongs to the amidase family. GatA subfamily. As to quaternary structure, heterotrimer of A, B and C subunits.

The enzyme catalyses L-glutamyl-tRNA(Gln) + L-glutamine + ATP + H2O = L-glutaminyl-tRNA(Gln) + L-glutamate + ADP + phosphate + H(+). Allows the formation of correctly charged Gln-tRNA(Gln) through the transamidation of misacylated Glu-tRNA(Gln) in organisms which lack glutaminyl-tRNA synthetase. The reaction takes place in the presence of glutamine and ATP through an activated gamma-phospho-Glu-tRNA(Gln). This chain is Glutamyl-tRNA(Gln) amidotransferase subunit A, found in Desulforudis audaxviator (strain MP104C).